Here is a 222-residue protein sequence, read N- to C-terminus: Glutathione transferase GST 23 (222 aa).

The GST N-terminal domain occupies Lys4–Tyr83. Glutathione is bound by residues Ser14, Lys41, Val55, and Glu67–Ser68. Positions Asp89–Leu220 constitute a GST C-terminal domain.

It belongs to the GST superfamily.

It catalyses the reaction RX + glutathione = an S-substituted glutathione + a halide anion + H(+). Involved in multiple disease resistance (MDR). This is Glutathione transferase GST 23 from Zea mays (Maize).